A 434-amino-acid polypeptide reads, in one-letter code: 3-phosphoshikimate 1-carboxyvinyltransferase (434 aa).

3-phosphoshikimate-binding residues include K15, S16, and R20. Residue K15 coordinates phosphoenolpyruvate. Residues G96 and R124 each contribute to the phosphoenolpyruvate site. 3-phosphoshikimate is bound by residues S169, Q171, S195, D319, and K346. Residue Q171 coordinates phosphoenolpyruvate. The active-site Proton acceptor is the D319. Phosphoenolpyruvate-binding residues include R350 and R394.

It belongs to the EPSP synthase family. In terms of assembly, monomer.

Its subcellular location is the cytoplasm. It carries out the reaction 3-phosphoshikimate + phosphoenolpyruvate = 5-O-(1-carboxyvinyl)-3-phosphoshikimate + phosphate. It participates in metabolic intermediate biosynthesis; chorismate biosynthesis; chorismate from D-erythrose 4-phosphate and phosphoenolpyruvate: step 6/7. Catalyzes the transfer of the enolpyruvyl moiety of phosphoenolpyruvate (PEP) to the 5-hydroxyl of shikimate-3-phosphate (S3P) to produce enolpyruvyl shikimate-3-phosphate and inorganic phosphate. The sequence is that of 3-phosphoshikimate 1-carboxyvinyltransferase from Prosthecochloris aestuarii (strain DSM 271 / SK 413).